We begin with the raw amino-acid sequence, 540 residues long: Aquaporin-5 (540 aa).

Positions 1 to 224 (MSGEGTDLPT…ESIDGYNYES (224 aa)) are disordered. The Cytoplasmic portion of the chain corresponds to 1 to 263 (MSGEGTDLPT…QWMNSNFKNH (263 aa)). The segment covering 25-44 (PGSSQQQLVPIAHTISSPSK) has biased composition (polar residues). Basic and acidic residues-rich tracts occupy residues 119–133 (RARE…EREN), 140–155 (RARD…ERSR), 174–194 (YFDD…KGMR), and 204–214 (SGEKVRRKSTD). Residues 264–284 (FVATIGEFVGTTMFLFFAFAG) traverse the membrane as a helical segment. The Extracellular portion of the chain corresponds to 285-308 (TQVANIDSNTVNTTTGAATGFNIA). N-linked (GlcNAc...) asparagine glycosylation is present at Asn296. Residues 309-329 (VQLYIAVIFGFSLMVNVWIFF) traverse the membrane as a helical segment. The Cytoplasmic segment spans residues 330-332 (RIS). A helical membrane pass occupies residues 333–353 (GGLFNPAVTLGMVLVGAIPIP). Residues 354-356 (RAA) are Extracellular-facing. Residues 357–377 (CLFFAQILGGIAASGMVLGLF) form a helical membrane-spanning segment. The Cytoplasmic segment spans residues 378–393 (PTTFNVRTTLGASTST). A helical transmembrane segment spans residues 394–414 (VQGVFIEAILTAELVFTIFML). The Extracellular segment spans residues 415-420 (AKEKHK). A helical membrane pass occupies residues 421–441 (ATFIAPVGIGLALFIAEMVGV). Residues 442-467 (YYTGGSLNPARSFGPCVVSGSFDKEH) are Cytoplasmic-facing. A helical membrane pass occupies residues 468 to 488 (WIYWIGPITGTFIAVFFYKFI). Residues 489-540 (KMLEYEMANPGQDGDAKNDPTQNEKKREQILEERNRRYEKRNGSLRPGSRLS) are Extracellular-facing. Residues 499-540 (GQDGDAKNDPTQNEKKREQILEERNRRYEKRNGSLRPGSRLS) form a disordered region. Basic and acidic residues predominate over residues 502–530 (GDAKNDPTQNEKKREQILEERNRRYEKRN). N-linked (GlcNAc...) asparagine glycosylation occurs at Asn530.

The protein belongs to the MIP/aquaporin (TC 1.A.8) family.

The protein localises to the membrane. It catalyses the reaction H2O(in) = H2O(out). In terms of biological role, water channel required to facilitate the transport of water across membranes. May play a role in the vegetative growth. The polypeptide is Aquaporin-5 (Botryotinia fuckeliana (strain B05.10) (Noble rot fungus)).